The chain runs to 238 residues: Ribonuclease PH (238 aa).

Residues R86 and 124-126 (GTR) each bind phosphate.

It belongs to the RNase PH family. As to quaternary structure, homohexameric ring arranged as a trimer of dimers.

The catalysed reaction is tRNA(n+1) + phosphate = tRNA(n) + a ribonucleoside 5'-diphosphate. Phosphorolytic 3'-5' exoribonuclease that plays an important role in tRNA 3'-end maturation. Removes nucleotide residues following the 3'-CCA terminus of tRNAs; can also add nucleotides to the ends of RNA molecules by using nucleoside diphosphates as substrates, but this may not be physiologically important. Probably plays a role in initiation of 16S rRNA degradation (leading to ribosome degradation) during starvation. In Shigella dysenteriae serotype 1 (strain Sd197), this protein is Ribonuclease PH.